A 217-amino-acid chain; its full sequence is MNYPHPLIAREGWPFLAGAFLISLLVHASAGFWWALPLWIITLFVLQFFRDPPRPIPAQPNAVLAPADGRIVVVEKVQDPYAGREALKISVFMNVFNVHSNRASVDGKVEKLEYFPGKFVNADLDKASVENERNAVVIRRAADGQIVTLVQVAGLVARRILCYTKVGDSLSRGQRYGFIRFGSRVDVYLPVSARPRVTIGEKVSASSTILAELDEVK.

The active-site Schiff-base intermediate with substrate; via pyruvic acid is the S183. Position 183 is a pyruvic acid (Ser); by autocatalysis (S183).

It belongs to the phosphatidylserine decarboxylase family. PSD-A subfamily. As to quaternary structure, heterodimer of a large membrane-associated beta subunit and a small pyruvoyl-containing alpha subunit. The cofactor is pyruvate. In terms of processing, is synthesized initially as an inactive proenzyme. Formation of the active enzyme involves a self-maturation process in which the active site pyruvoyl group is generated from an internal serine residue via an autocatalytic post-translational modification. Two non-identical subunits are generated from the proenzyme in this reaction, and the pyruvate is formed at the N-terminus of the alpha chain, which is derived from the carboxyl end of the proenzyme. The post-translation cleavage follows an unusual pathway, termed non-hydrolytic serinolysis, in which the side chain hydroxyl group of the serine supplies its oxygen atom to form the C-terminus of the beta chain, while the remainder of the serine residue undergoes an oxidative deamination to produce ammonia and the pyruvoyl prosthetic group on the alpha chain.

The protein resides in the cell membrane. The enzyme catalyses a 1,2-diacyl-sn-glycero-3-phospho-L-serine + H(+) = a 1,2-diacyl-sn-glycero-3-phosphoethanolamine + CO2. Its pathway is phospholipid metabolism; phosphatidylethanolamine biosynthesis; phosphatidylethanolamine from CDP-diacylglycerol: step 2/2. Functionally, catalyzes the formation of phosphatidylethanolamine (PtdEtn) from phosphatidylserine (PtdSer). This chain is Phosphatidylserine decarboxylase proenzyme, found in Cupriavidus pinatubonensis (strain JMP 134 / LMG 1197) (Cupriavidus necator (strain JMP 134)).